The chain runs to 227 residues: PKHD-type hydroxylase Bcen_3557 (227 aa).

Positions 78–178 constitute a Fe2OG dioxygenase domain; sequence KVFPPLFNRY…RVASFFWIQS (101 aa). Fe cation-binding residues include His-96, Asp-98, and His-159. Arg-169 provides a ligand contact to 2-oxoglutarate.

Fe(2+) serves as cofactor. It depends on L-ascorbate as a cofactor.

The chain is PKHD-type hydroxylase Bcen_3557 from Burkholderia orbicola (strain AU 1054).